Consider the following 3242-residue polypeptide: tRNA nuclease CdiA (3242 aa).

Positions 1–32 are cleaved as a signal peptide; it reads MHQPPVRFTYRLLSYLISTIIAGQPLLPAVGA. A two-partner system transport domain (TPS) region spans residues 36–322; the sequence is PQNGAGMDKA…AGGNLSVTGT (287 aa). Positions 351 to 1376 are FHA-1; sequence GELTAGQNAM…IVVRTGHLLN (1026 aa). Residues 1377–1668 form a receptor-binding domain (RBD) region; it reads QREGFSATTT…TGQTGISDDW (292 aa). Residues 1668 to 1852 are YP domain; sequence WPLPSGNNGY…LSPEDITLHN (185 aa). The interval 1853 to 1913 is periplasmic FHA-1 repeat (pFR); the sequence is GSVISGNNVQ…DLSAIGDISN (61 aa). Residues 2021 to 2631 form an FHA-2 region; it reads DNSASSTTSQ…TSKYDSKQTS (611 aa). A compositionally biased stretch (basic and acidic residues) spans 2075-2091; it reads RESKNSRNGRSESHESH. 3 disordered regions span residues 2075-2094, 2310-2333, and 2439-2481; these read RESK…HAAV, GSSK…STIG, and TMAS…NAGN. The segment covering 2322–2333 has biased composition (polar residues); it reads GTTQSQSASTIG. The interval 2969-3242 is DUF638-CT domain; not toxic when added to the outside of E.coli, does not interfere with F-pilus mediated conjugation, toxic when expressed intracellularly; that stretch reads GVDPSKLTED…IESALKGYGI (274 aa). The pre-toxin (PT) domain stretch occupies residues 2972-3015; that stretch reads PSKLTEDQKQTVSTLATLSAGMAGGIASGDVAGAAAGAGAGKNV. Residues 3016-3019 carry the VENN CT cleavage motif motif; the sequence is VENN. Residues 3016–3097 form a toxin import domain; sufficient to import the tRNA nuclease domain of colicin E5 into E.coli, may bind F-pili region; the sequence is VENNALSLVA…KYLSSLHDKY (82 aa). Residues 3016–3242 are CT domain; toxic when added to the outside of E.coli and when expressed intracellularly; it reads VENNALSLVA…IESALKGYGI (227 aa). Residues 3020-3141 form an inner membrane translocation domain (IMTD), targets protein to FtsH region; the sequence is ALSLVARGCA…SENDPKQQNE (122 aa). The interval 3020-3242 is C-terminal effector domain (CT); it reads ALSLVARGCA…IESALKGYGI (223 aa). Positions 3098–3242 are tRNase function, does not interfere with F-pilus mediated conjugation; that stretch reads GSGAASNPNI…IESALKGYGI (145 aa). Residues 3116–3146 are disordered; it reads KVELGGSGSGTGTPPPSENDPKQQNEKTVDK. The span at 3134-3146 shows a compositional bias: basic and acidic residues; it reads NDPKQQNEKTVDK. Residues 3137-3238 adopt a coiled-coil conformation; it reads KQQNEKTVDK…AINKIESALK (102 aa). Active-site residues include Asp-3170, His-3193, and Glu-3196.

This sequence in the N-terminal section; belongs to the CdiA toxin family. As to quaternary structure, the C-terminal (CT) domain interacts with cognate CdiI but not non-cognate CdiI from D.dadantii strain 3937. CdiA-CT also interacts with CysK; this is blocked upon preincubation with O-acetyl-L-serine. CysK forms a complex with CdiA-CT/CdiI. One CdiA toxin subunit binds to each subunit of the CysK homodimer, and one CdiI immunity protein binds to each toxin subunit; the immune complex is thus a dimer of trimers. The 4 C-terminal residues of CdiA fit into the active site of CysK. A divalent metal cation serves as cofactor.

The protein resides in the secreted. It is found in the target cell membrane. It localises to the target cell. The protein localises to the target cell cytoplasm. Its function is as follows. Toxic component of a toxin-immunity protein module, which functions as a cellular contact-dependent growth inhibition (CDI) system. CDI modules allow bacteria to communicate with and inhibit the growth of closely related neighboring bacteria in a contact-dependent fashion (target cell counts decrease 100- to 1000-fold). CdiA toxicity is neutralized by its cognate immunity protein CdiI, but not by CdiI from other bacteria. Uses heterotrimeric OmpC and OmpF as target cell outer membrane receptors; receptor function depends on polymorphisms in extracellular loops L4 and L5 of OmpC; interacts with itself and closely related bacteria but also with OmpC from E.cloacae ATCC 13047. Its ability to preferentially bind to 'self' receptors suggests it may also play a role in self-recognition and kin selection. A bamA mutation that decreases its expression about 5-fold is partially resistant to this strain of CdiA, probably due to decreased outer membrane receptor protein assembly. Isolated CdiA-CT is imported in an F-pilus-mediated fashion; CdiA-CT inhibits F-mediated conjugation, probably via its N-terminus (residues 3016-3097), although it is not clear if this is physiologically significant. Gains access to the cytoplasm of target cells by using integral inner membrane protein FtsH. The C-terminal domain (CT) cleaves within tRNA anticodon loops; this activity is inhibited by cognate CdiI. tRNase activity of CdiA-CT is stimulated by CysK, although the extreme C-terminus (residues 3098-3242) has tRNase activity in the absence of CysK. In vivo CDI toxicity requires CysK. CysK stabilizes CdiA-CT, allowing it to bind tRNA substrate; neither CdiA-CT nor CysK bind tRNA alone in vitro. Purified CdiA-CT (residues 3016-3242) inhibits E.coli cell growth when added to cultures alone or in complex with cognate CdiI, growth is inhibited when cognate CdiI is present within the cell but not when a CdiA-CT/CdiI complex is added extracellularly, suggesting CdiA-CT alone but not the CdiA-CT/CdiI complex is imported into the target cell. Functionally, the CdiA protein is thought to be exported from the cell through the central lumen of CdiB, the other half of its two-partner system (TPS). The TPS domain probably remains associated with CdiB while the FHA-1 domain forms an extended filament with the receptor-binding domain (RBD) at its extremity; in the secretion arrested state the C-terminus of the RBD and YP domains form a hairpin-like structure as the FHA-2, PT and CT domains are periplasmic. The YP domain is probably responsible for this arrest at the point where it re-enters the host cell periplasm. Upon binding to a target cell outer membrane receptor (heterotrimeric OmpC-OmpF for this CDI) a signal is transmitted to activate secretion. The filament elongates slightly, the rest of CdiA is secreted and the FHA-2 domain becomes stably associated with the target cell's outer membrane where it facilitates entry of the toxic CT domain into the target cell periplasm. From there the toxic CT domain is cleaved and gains access to the target cell cytoplasm via an inner membrane protein (FtsH for this CDI). This Escherichia coli O6:K15:H31 (strain 536 / UPEC) protein is tRNA nuclease CdiA.